Consider the following 149-residue polypeptide: Large ribosomal subunit protein bL9 (149 aa).

The protein belongs to the bacterial ribosomal protein bL9 family.

Binds to the 23S rRNA. The polypeptide is Large ribosomal subunit protein bL9 (Bacillus pumilus (strain SAFR-032)).